A 201-amino-acid polypeptide reads, in one-letter code: ATP-dependent Clp protease proteolytic subunit (201 aa).

S100 functions as the Nucleophile in the catalytic mechanism. The active site involves H125.

The protein belongs to the peptidase S14 family. In terms of assembly, component of the chloroplastic Clp protease core complex.

The protein resides in the plastid. It is found in the chloroplast stroma. The catalysed reaction is Hydrolysis of proteins to small peptides in the presence of ATP and magnesium. alpha-casein is the usual test substrate. In the absence of ATP, only oligopeptides shorter than five residues are hydrolyzed (such as succinyl-Leu-Tyr-|-NHMec, and Leu-Tyr-Leu-|-Tyr-Trp, in which cleavage of the -Tyr-|-Leu- and -Tyr-|-Trp bonds also occurs).. In terms of biological role, cleaves peptides in various proteins in a process that requires ATP hydrolysis. Has a chymotrypsin-like activity. Plays a major role in the degradation of misfolded proteins. This Ranunculus macranthus (Large buttercup) protein is ATP-dependent Clp protease proteolytic subunit.